The following is a 169-amino-acid chain: Dihydrofolate reductase type 8 (169 aa).

One can recognise a DHFR domain in the interval 3 to 169; it reads ELHAILAATA…FTYRKKELTE (167 aa).

This sequence belongs to the dihydrofolate reductase family. Homodimer.

It catalyses the reaction (6S)-5,6,7,8-tetrahydrofolate + NADP(+) = 7,8-dihydrofolate + NADPH + H(+). It functions in the pathway cofactor biosynthesis; tetrahydrofolate biosynthesis; 5,6,7,8-tetrahydrofolate from 7,8-dihydrofolate: step 1/1. In terms of biological role, key enzyme in folate metabolism. Catalyzes an essential reaction for de novo glycine and purine synthesis, and for DNA precursor synthesis. The chain is Dihydrofolate reductase type 8 (dhfrVIII) from Escherichia coli.